The primary structure comprises 624 residues: uncharacterized protein (624 aa).

The interval 113-249 is disordered; sequence SINVRTSATT…RFHPVTDINK (137 aa). Positions 118-225 are enriched in low complexity; it reads TSATTTESTN…ATTTESTNAS (108 aa). Residues 226 to 249 are compositionally biased toward basic and acidic residues; that stretch reads AKEDANKDGNAEDNRFHPVTDINK.

This is an uncharacterized protein from Saccharomyces cerevisiae (strain ATCC 204508 / S288c) (Baker's yeast).